The sequence spans 455 residues: Kynurenine--oxoglutarate transaminase 3 (455 aa).

A substrate-binding site is contributed by glycine 72. Residue lysine 117 is modified to N6-acetyllysine; alternate. An N6-succinyllysine; alternate modification is found at lysine 117. Asparagine 219 lines the substrate pocket. At lysine 281 the chain carries N6-(pyridoxal phosphate)lysine. Arginine 430 provides a ligand contact to substrate.

The protein belongs to the class-I pyridoxal-phosphate-dependent aminotransferase family. In terms of assembly, homodimer. Pyridoxal 5'-phosphate serves as cofactor. As to expression, widely expressed, with higher expression levels in liver, kidney, heart and neuroendocrine tissues.

The enzyme catalyses L-kynurenine + 2-oxoglutarate = kynurenate + L-glutamate + H2O. It catalyses the reaction L-kynurenine + glyoxylate = kynurenate + glycine + H2O. The catalysed reaction is 3-hydroxy-L-kynurenine + glyoxylate = xanthurenate + glycine + H2O. It carries out the reaction an S-substituted L-cysteine + H2O = a thiol + pyruvate + NH4(+). The protein operates within amino-acid degradation; L-kynurenine degradation; kynurenate from L-kynurenine: step 1/2. With respect to regulation, kynurenine transamination is competitively inhibited by cysteine, glutamine, histidine, methionine, leucine, or phenylalanine. Functionally, catalyzes the irreversible transamination of the L-tryptophan metabolite L-kynurenine to form kynurenic acid (KA), an intermediate in the tryptophan catabolic pathway which is also a broad spectrum antagonist of the three ionotropic excitatory amino acid receptors among others. May catalyze the beta-elimination of S-conjugates and Se-conjugates of L-(seleno)cysteine, resulting in the cleavage of the C-S or C-Se bond. Has transaminase activity towards L-kynurenine, tryptophan, phenylalanine, serine, cysteine, methionine, histidine, glutamine and asparagine with glyoxylate as an amino group acceptor (in vitro). Has lower activity with 2-oxoglutarate as amino group acceptor (in vitro). The chain is Kynurenine--oxoglutarate transaminase 3 (Kyat3) from Mus musculus (Mouse).